The sequence spans 654 residues: Translation factor GUF1, mitochondrial (654 aa).

In terms of domain architecture, tr-type G spans 57–237 (ENYRNFSIVA…SVIKNIPSPV (181 aa)). GTP is bound by residues 66-73 (AHVDHGKS), 130-134 (DTPGH), and 184-187 (NKID).

This sequence belongs to the TRAFAC class translation factor GTPase superfamily. Classic translation factor GTPase family. LepA subfamily.

It localises to the mitochondrion inner membrane. It catalyses the reaction GTP + H2O = GDP + phosphate + H(+). In terms of biological role, promotes mitochondrial protein synthesis. May act as a fidelity factor of the translation reaction, by catalyzing a one-codon backward translocation of tRNAs on improperly translocated ribosomes. Binds to mitochondrial ribosomes in a GTP-dependent manner. This is Translation factor GUF1, mitochondrial from Candida albicans (strain SC5314 / ATCC MYA-2876) (Yeast).